We begin with the raw amino-acid sequence, 111 residues long: Nucleoid-associated protein NMCC_1355 (111 aa).

The protein belongs to the YbaB/EbfC family. As to quaternary structure, homodimer.

It is found in the cytoplasm. Its subcellular location is the nucleoid. In terms of biological role, binds to DNA and alters its conformation. May be involved in regulation of gene expression, nucleoid organization and DNA protection. In Neisseria meningitidis serogroup C (strain 053442), this protein is Nucleoid-associated protein NMCC_1355.